The sequence spans 341 residues: L-threonine 3-dehydrogenase (341 aa).

Cysteine 38 lines the Zn(2+) pocket. Active-site charge relay system residues include threonine 40 and histidine 43. Zn(2+) contacts are provided by histidine 63, glutamate 64, cysteine 93, cysteine 96, cysteine 99, and cysteine 107. NAD(+) contacts are provided by residues isoleucine 175, aspartate 195, arginine 200, 262-264 (LGI), and 286-287 (IY).

It belongs to the zinc-containing alcohol dehydrogenase family. As to quaternary structure, homotetramer. Zn(2+) serves as cofactor.

It localises to the cytoplasm. It carries out the reaction L-threonine + NAD(+) = (2S)-2-amino-3-oxobutanoate + NADH + H(+). The protein operates within amino-acid degradation; L-threonine degradation via oxydo-reductase pathway; glycine from L-threonine: step 1/2. Functionally, catalyzes the NAD(+)-dependent oxidation of L-threonine to 2-amino-3-ketobutyrate. The polypeptide is L-threonine 3-dehydrogenase (Alteromonas mediterranea (strain DSM 17117 / CIP 110805 / LMG 28347 / Deep ecotype)).